The sequence spans 413 residues: Chloramphenicol resistance protein CraA (413 aa).

Transmembrane regions (helical) follow at residues 18 to 38 (LMFPLALVLFEFAVYIGNDLI), 55 to 75 (WAPSSMSFYLLGGASVAWLLG), 84 to 104 (KKVLLSGVLFFALCCFLILLT), 110 to 130 (FLTLRFLQGIGLSVISAVGYA), 147 to 167 (LMANISLLAPLLGPVLGAFLI), 170 to 190 (VSWHWGFVAIALLALLSWVGL), 228 to 248 (ALPLVGMPLMLWIALSPIILV), 260 to 280 (LAQFPVFLGLIVGNIVLIKII), 289 to 309 (VLIGLPIMLTGTLILILGVVW), 312 to 332 (YLIPCLLIGMTLICFGEGISF), 349 to 369 (TVAAAVSMLLMTSFFAMIELV), and 373 to 393 (YTQFHLWAFVLSAFAFIALWF).

The protein belongs to the major facilitator superfamily.

It is found in the cell inner membrane. Efflux pump that mediates resistance to chloramphenicol. The polypeptide is Chloramphenicol resistance protein CraA (Acinetobacter baumannii (strain ATCC 19606 / DSM 30007 / JCM 6841 / CCUG 19606 / CIP 70.34 / NBRC 109757 / NCIMB 12457 / NCTC 12156 / 81)).